The chain runs to 312 residues: uncharacterized protein (312 aa).

This sequence belongs to the mimivirus R69 family.

This is an uncharacterized protein from Acanthamoeba polyphaga mimivirus (APMV).